Reading from the N-terminus, the 2136-residue chain is Methylcytosine dioxygenase TET1 (2136 aa).

2 stretches are compositionally biased toward basic residues: residues 1-12 and 20-31; these read MSRSRHARPSRL and KKKKNSQLRKTT. A disordered region spans residues 1 to 47; sequence MSRSRHARPSRLVRKEDVNKKKKNSQLRKTTKGANKNVASVKTLSPG. Over residues 32–43 the composition is skewed to polar residues; the sequence is KGANKNVASVKT. Residues 528–674 form a sufficient for binding to genomic CpG islands region; the sequence is LGIAQLSQAG…NGPKSESMDY (147 aa). Residues 584–625 form a CXXC-type zinc finger; it reads EKKKRKRCGVCEPCQQKTNCGECTYCKNRKNSHQICKKRKCE. Residues Cys-591, Cys-594, Cys-597, Cys-603, Cys-606, Cys-609, Cys-619, and Cys-624 each coordinate Zn(2+). Basic and acidic residues-rich tracts occupy residues 712 to 724, 732 to 743, and 849 to 869; these read QNKKSQLTDHVKG, EAEKSKNSEVDK, and IHNEGDQPKTPENIPSKEPKD. 4 disordered regions span residues 712–746, 849–876, 899–923, and 1119–1169; these read QNKKSQLTDHVKGDFSANVPEAEKSKNSEVDKKRT, IHNEGDQPKTPENIPSKEPKDGSPVQPS, QLSEAPSENSSPSKSEKDEESEQRT, and EKGT…VSYQ. A Phosphoserine modification is found at Ser-871. Over residues 901–911 the composition is skewed to low complexity; the sequence is SEAPSENSSPS. Residues 1119 to 1139 are compositionally biased toward polar residues; the sequence is EKGTIQQKPPSSVHNNHGSSL. The span at 1146 to 1163 shows a compositional bias: basic residues; that stretch reads TQKKTKSTPSRDRRKKKP. Zn(2+) is bound by residues Cys-1422, Cys-1424, Cys-1482, His-1508, and Cys-1510. Position 1551 (Arg-1551) interacts with 2-oxoglutarate. Residues Cys-1561, Cys-1563, Cys-1579, and Cys-1588 each coordinate Zn(2+). The interval 1580-1593 is interaction with DNA; that stretch reads SWSMYFNGCKFGRS. A Glycyl lysine isopeptide (Lys-Gly) (interchain with G-Cter in ubiquitin) cross-link involves residue Lys-1589. Position 1648 (Cys-1648) interacts with Zn(2+). Position 1664 (Cys-1664) interacts with 2-oxoglutarate. His-1670 provides a ligand contact to Zn(2+). 2 residues coordinate Fe cation: His-1672 and Asp-1674. Position 1677 (Asn-1677) interacts with substrate. A 2-oxoglutarate-binding site is contributed by His-1706. Disordered regions lie at residues 1774 to 1897 and 1919 to 1984; these read EKKP…AAAD and EPLI…SPAE. Residues 1786–1800 are compositionally biased toward low complexity; it reads NSTTTNNSKPSSLPT. 2 stretches are compositionally biased toward polar residues: residues 1824-1833 and 1937-1953; these read SSDNTKTYSL and HQPNHQPSFLTSPQDLA. Positions 1957–1976 are enriched in acidic residues; that stretch reads MEEDEQHSEADEPPSDEPLS. Fe cation is bound at residue His-2028. 2043-2045 is a 2-oxoglutarate binding site; it reads RLS. Position 2049–2051 (2049–2051) interacts with substrate; it reads YQH. Zn(2+) is bound at residue His-2059. Over residues 2074–2087 the composition is skewed to basic and acidic residues; the sequence is KNKKMKASEQKDQA. Residues 2074-2100 form a disordered region; the sequence is KNKKMKASEQKDQAANEGPEQSSEVNE.

The protein belongs to the TET family. In terms of assembly, interacts with SIN3A; recruits the transcriptional corepressor SIN3A to gene promoters. Interacts with HCFC1. Interacts (via C-terminus) with OGT. Found in a complex composed of at least SINHCAF, SIN3A, HDAC1, SAP30, RBBP4, OGT and TET1. Interacts with QSER1. Interacts with NONO (via DNA-binding domain); this interaction recruits TET1 to genomic loci. Interacts with FOXA2; this interaction may recruit TET1 to specific enhancers to preserve their unmethylated status and hence allowing gene expression. Interacts with RNF2. Directly interacts (via C-terminus) with the DCAF1 component of the CRL4(VprBP) E3 ubiquitin-protein ligase complex. As to quaternary structure, interacts with UHRF1; this interaction induces the recruitment of TET1 to replicating heterochromatin. Interacts with DCAF1. It depends on Fe(2+) as a cofactor. Zn(2+) serves as cofactor. In terms of processing, glycosylated. Interaction with OGT leads to GlcNAcylation. Post-translationally, monoubiquitinated at Lys-1589 by the DCX (DDB1-CUL4-X-box) E3 ubiquitin-protein ligase complex called CRL4(VprBP) or CUL4A-RBX1-DDB1-DCAF1/VPRBP complex; this modification promotes binding to DNA. Expressed in fetal heart, lung and brain, and in adult skeletal muscle, thymus and ovary. Not detected in adult heart, lung or brain. Up-regulated in glioblastoma cells (at protein level). In terms of tissue distribution, expressed in embryonic stem cells (at protein level).

Its subcellular location is the nucleus. It is found in the chromosome. It catalyses the reaction a 5-methyl-2'-deoxycytidine in DNA + 2-oxoglutarate + O2 = a 5-hydroxymethyl-2'-deoxycytidine in DNA + succinate + CO2. The enzyme catalyses a 5-hydroxymethyl-2'-deoxycytidine in DNA + 2-oxoglutarate + O2 = a 5-formyl-2'-deoxycytidine in DNA + succinate + CO2 + H2O. The catalysed reaction is a 5-formyl-2'-deoxycytidine in DNA + 2-oxoglutarate + O2 = a 5-carboxyl-2'-deoxycytidine in DNA + succinate + CO2 + H(+). Its function is as follows. Dioxygenase that plays a key role in active DNA demethylation, by catalyzing the sequential oxidation of the modified genomic base 5-methylcytosine (5mC) into 5-hydroxymethylcytosine (5hmC), 5-formylcytosine (5fC), and 5-carboxylcytosine (5caC). In addition to its role in DNA demethylation, plays a more general role in chromatin regulation by recruiting histone modifying protein complexes to alter histone marks and chromatin accessibility, leading to both activation and repression of gene expression. Plays therefore a role in many biological processes, including stem cell maintenance, T- and B-cell development, inflammation regulation, genomic imprinting, neural activity or DNA repair. Involved in the balance between pluripotency and lineage commitment of cells and plays a role in embryonic stem cells maintenance and inner cell mass cell specification. Together with QSER1, plays an essential role in the protection and maintenance of transcriptional and developmental programs to inhibit the binding of DNMT3A/3B and therefore de novo methylation. May play a role in pancreatic beta-cell specification during development. In this context, may function as an upstream epigenetic regulator of PAX4 presumably through direct recruitment by FOXA2 to a PAX4 enhancer to preserve its unmethylated status, thereby potentiating PAX4 expression to adopt beta-cell fate during endocrine lineage commitment. Under DNA hypomethylation conditions, such as in female meiotic germ cells, may induce epigenetic reprogramming of pericentromeric heterochromatin (PCH), the constitutive heterochromatin of pericentromeric regions. PCH forms chromocenters in the interphase nucleus and chromocenters cluster at the prophase of meiosis. In this context, may also be essential for chromocenter clustering in a catalytic activity-independent manner, possibly through the recruitment polycomb repressive complex 1 (PRC1) to the chromocenters. During embryonic development, may be required for normal meiotic progression in oocytes and meiotic gene activation. Binds preferentially to DNA containing cytidine-phosphate-guanosine (CpG) dinucleotides over CpH (H=A, T, and C), hemimethylated-CpG and hemimethylated-hydroxymethyl-CpG. Dioxygenase that plays a key role in active DNA demethylation. Binds to promoters, particularly to those with high CG content. In hippocampal neurons, isoform 1 regulates the expression of a unique subset of genes compared to isoform 2, although some overlap exists between both isoforms, hence differentially regulates excitatory synaptic transmission. In hippocampal neuron cell cultures, isoform 1 controls both miniature excitatory postsynaptic current amplitude and frequency. Isoform 1 may regulate genes involved in hippocampal-dependent memory, leading to positive regulation of memory, contrary to isoform 2 that may decrease memory. In terms of biological role, dioxygenase that plays a key role in active DNA demethylation. As isoform 1, binds to promoters, particularly to those with high CG content, however displays reduced global chromatin affinity compared with isoform 1, leading to decreased global DNA demethylation compared with isoform 1. Contrary to isoform 1, isoform 2 localizes during S phase to sites of ongoing DNA replication in heterochromatin, causing a significant de novo 5hmC formation, globally, and more so in heterochromatin, including LINE 1 interspersed DNA repeats leading to their activation. In hippocampal neurons, isoform 2 regulates the expression of a unique subset of genes compared to isoform 1, although some overlap between both isoforms, hence differentially regulates excitatory synaptic transmission. In hippocampal neuron cell cultures, isoform 2 controls miniature excitatory postsynaptic current frequency, but not amplitude. Isoform 2 may regulate genes involved in hippocampal-dependent memory, leading to negative regulation of memory, contrary to isoform 1 that may improve memory. In immature and partially differentiated gonadotrope cells, directly represses luteinizing hormone gene LHB expression and does not catalyze 5hmC at the gene promoter. The chain is Methylcytosine dioxygenase TET1 from Homo sapiens (Human).